Here is a 620-residue protein sequence, read N- to C-terminus: Sorbicillinoid biosynthetic cluster transcription factor 1 (620 aa).

Positions 10–37 form a DNA-binding region, zn(2)-C6 fungal-type; that stretch reads CEECRRRKARCDRVRPQCGICADAGRTC. The segment at 285-308 is disordered; that stretch reads HDDETSPNENSGSCPSVSPSTTQN. The span at 291–308 shows a compositional bias: polar residues; that stretch reads PNENSGSCPSVSPSTTQN.

It is found in the nucleus. Transcription factor that acts as the main regulator of the gene cluster that mediates the biosynthesis of sorbicillinoids, a diverse group of yellow secondary metabolites that restrict growth of competing pathogenic fungi but not of bacteria. The polypeptide is Sorbicillinoid biosynthetic cluster transcription factor 1 (Penicillium rubens (strain ATCC 28089 / DSM 1075 / NRRL 1951 / Wisconsin 54-1255) (Penicillium chrysogenum)).